The chain runs to 146 residues: Large ribosomal subunit protein uL15 (146 aa).

A disordered region spans residues 1–53 (MILSNLKPVPGARHSKKRLGRGPGSGTGKTSGKGHKGQKARSGGGVRPGFEGG). Gly residues-rich tracts occupy residues 21 to 31 (RGPGSGTGKTS) and 42 to 52 (SGGGVRPGFEG).

The protein belongs to the universal ribosomal protein uL15 family. As to quaternary structure, part of the 50S ribosomal subunit.

Functionally, binds to the 23S rRNA. The polypeptide is Large ribosomal subunit protein uL15 (Acholeplasma laidlawii (strain PG-8A)).